Here is a 278-residue protein sequence, read N- to C-terminus: Large ribosomal subunit protein uL2 (278 aa).

The tract at residues 223–278 is disordered; sequence GVAMNPIDHPHGGGEGRTSGGRHPVTPWGFPTKGKKTRSNKRTDTFIVSSRHNRKK.

The protein belongs to the universal ribosomal protein uL2 family. Part of the 50S ribosomal subunit. Forms a bridge to the 30S subunit in the 70S ribosome.

Its function is as follows. One of the primary rRNA binding proteins. Required for association of the 30S and 50S subunits to form the 70S ribosome, for tRNA binding and peptide bond formation. It has been suggested to have peptidyltransferase activity; this is somewhat controversial. Makes several contacts with the 16S rRNA in the 70S ribosome. In Methylobacterium sp. (strain 4-46), this protein is Large ribosomal subunit protein uL2.